The chain runs to 521 residues: Zinc finger protein 394 (521 aa).

A disordered region spans residues 1–45 (MAAGSGVVPPPLGAGLCTVKVEEDSPGNQESSGSGDWQNPETSRK). A Glycyl lysine isopeptide (Lys-Gly) (interchain with G-Cter in SUMO2) cross-link involves residue K20. The segment covering 26–41 (PGNQESSGSGDWQNPE) has biased composition (polar residues). An SCAN box domain is found at 38–133 (QNPETSRKQF…RALDRASPQG (96 aa)). A KRAB domain is found at 135–196 (MTFKDVAESL…KQEILKEAEP (62 aa)). Residue K259 forms a Glycyl lysine isopeptide (Lys-Gly) (interchain with G-Cter in SUMO2) linkage. C2H2-type zinc fingers lie at residues 327–349 (YKCD…QRIH), 355–377 (YQCQ…QRTH), and 383–405 (YACP…QRTH). The C2H2-type 4; atypical zinc finger occupies 411–432 (YKCEECGEIVHVSSLFRHQRLH). K412 participates in a covalent cross-link: Glycyl lysine isopeptide (Lys-Gly) (interchain with G-Cter in SUMO2). 3 C2H2-type zinc fingers span residues 438-460 (YKCG…QRTH), 466-488 (YACV…QRTH), and 494-516 (YKCF…QRIH).

Belongs to the krueppel C2H2-type zinc-finger protein family. As to expression, expressed at high level in testis.

The protein localises to the nucleus. Functionally, may be involved in transcriptional regulation. The sequence is that of Zinc finger protein 394 (Znf394) from Mus musculus (Mouse).